A 245-amino-acid polypeptide reads, in one-letter code: Phosducin (245 aa).

Acidic residues predominate over residues 1–14 (MEEAKSQSLEEDFE). Residues 1–68 (MEEAKSQSLE…RDNKDSKERF (68 aa)) are disordered. The region spanning 1-241 (MEEAKSQSLE…THALDQTNME (241 aa)) is the Phosducin domain. Residues 59–68 (RDNKDSKERF) show a composition bias toward basic and acidic residues. Phosphoserine; by PKA is present on Ser73. A thioredoxin fold region spans residues 111–245 (YGFVYELETG…DQTNMEEDIE (135 aa)).

The protein belongs to the phosducin family. In terms of assembly, interacts with CRX. Forms a complex with the beta and gamma subunits of the GTP-binding protein, transducin. Post-translationally, light-induced changes in cyclic nucleotide levels modulate the phosphorylation of this protein by cAMP kinase.

The protein resides in the cytoplasm. The protein localises to the cytosol. It localises to the nucleus. Its subcellular location is the cell projection. It is found in the cilium. The protein resides in the photoreceptor outer segment. The protein localises to the photoreceptor inner segment. Inhibits the transcriptional activation activity of the cone-rod homeobox CRX. May participate in the regulation of visual phototransduction or in the integration of photoreceptor metabolism. The protein is Phosducin (PDC) of Felis catus (Cat).